A 401-amino-acid chain; its full sequence is MKTLKDLGDLKGKRVLVRADFNVPLDGTTITDDGRIKAALPTIKTLREEGAKVILMAHLGRPKGKVVPELSLAPVAARLGELLGTNVPLAKDTYGEDAQAKVAAMNDGDVVLLENVRFNPEETSKDADERAAYAKKIAALGEAFVSDGFGVVHRAQGSNYDVAADLPAAAGLLVEKEVKALSKATENPERPFTVVLGGSKVSDKLGVIENLLDKANRLVIGGGMVFTFLKAKGYEVGTSLLEEDQLEKVKGYIETAEKNGVELVLPTDVVVNAGFPAGDTPVAPEVVAADAIPADKMGLDIGPESQKLFHDKIVDSKTVVWNGPMGVFEVPEFAAGTKAVAQGLVDATAAGAFTIVGGGDSASAVRNLGFPEDGFSHISTGGGASLEFLEGKELPGLKVLE.

Residues 20–22, Arg35, 58–61, Arg117, and Arg154 each bind substrate; these read DFN and HLGR. Residues Lys204, Gly298, Glu329, and 358 to 361 each bind ATP; that span reads GGDS.

The protein belongs to the phosphoglycerate kinase family. In terms of assembly, monomer.

The protein localises to the cytoplasm. The catalysed reaction is (2R)-3-phosphoglycerate + ATP = (2R)-3-phospho-glyceroyl phosphate + ADP. Its pathway is carbohydrate degradation; glycolysis; pyruvate from D-glyceraldehyde 3-phosphate: step 2/5. In Bifidobacterium longum subsp. infantis (strain ATCC 15697 / DSM 20088 / JCM 1222 / NCTC 11817 / S12), this protein is Phosphoglycerate kinase.